The primary structure comprises 257 residues: Succinate dehydrogenase subunit 5, mitochondrial (257 aa).

The transit peptide at 1–89 (MGTLGRAIHT…AMGMGQVRRF (89 aa)) directs the protein to the mitochondrion.

Component of complex II composed of eight subunits in plants: four classical SDH subunits SDH1, SDH2, SDH3 and SDH4 (a flavoprotein (FP), an iron-sulfur protein (IP), and a cytochrome b composed of a large and a small subunit.), as well as four subunits unknown in mitochondria from bacteria and heterotrophic eukaryotes.

The protein localises to the mitochondrion inner membrane. Its pathway is carbohydrate metabolism; tricarboxylic acid cycle. This chain is Succinate dehydrogenase subunit 5, mitochondrial, found in Arabidopsis thaliana (Mouse-ear cress).